Consider the following 305-residue polypeptide: Probable 5-dehydro-4-deoxyglucarate dehydratase (305 aa).

The protein belongs to the DapA family.

The catalysed reaction is 5-dehydro-4-deoxy-D-glucarate + H(+) = 2,5-dioxopentanoate + CO2 + H2O. It functions in the pathway carbohydrate acid metabolism; D-glucarate degradation; 2,5-dioxopentanoate from D-glucarate: step 2/2. The chain is Probable 5-dehydro-4-deoxyglucarate dehydratase from Xanthomonas campestris pv. campestris (strain B100).